We begin with the raw amino-acid sequence, 456 residues long: Adenylosuccinate synthetase (456 aa).

Residues 11 to 17 and 39 to 41 each bind GTP; these read GDEGKGG and GHT. The active-site Proton acceptor is the Asp-12. Positions 12 and 39 each coordinate Mg(2+). Residues 12–15, 37–40, Thr-127, Arg-141, Gln-232, Thr-247, and Arg-328 each bind IMP; these read DEGK and NAGH. Catalysis depends on His-40, which acts as the Proton donor. 324 to 330 is a binding site for substrate; the sequence is TVTGRPR. GTP-binding positions include Arg-330, 356–358, and 441–443; these read HLD and GVG.

This sequence belongs to the adenylosuccinate synthetase family. Homodimer. It depends on Mg(2+) as a cofactor.

It is found in the cytoplasm. The enzyme catalyses IMP + L-aspartate + GTP = N(6)-(1,2-dicarboxyethyl)-AMP + GDP + phosphate + 2 H(+). It participates in purine metabolism; AMP biosynthesis via de novo pathway; AMP from IMP: step 1/2. Functionally, plays an important role in the de novo pathway of purine nucleotide biosynthesis. Catalyzes the first committed step in the biosynthesis of AMP from IMP. This Natronomonas pharaonis (strain ATCC 35678 / DSM 2160 / CIP 103997 / JCM 8858 / NBRC 14720 / NCIMB 2260 / Gabara) (Halobacterium pharaonis) protein is Adenylosuccinate synthetase.